A 1527-amino-acid polypeptide reads, in one-letter code: Lysophospholipase nte1 (1527 aa).

Residues 1–69 are Cytoplasmic-facing; that stretch reads MADDGGPFPL…PPPAPSTMVG (69 aa). Residues 70 to 90 traverse the membrane as a helical segment; sequence WIGWVFSFVFQVIPSILYWAI. At 91–112 the chain is on the lumenal side; the sequence is TFCTITLPTWLFTLFSMSLTFT. Residues 113 to 133 traverse the membrane as a helical segment; the sequence is MNFTTLLLIALAIVSTVSWFI. Topologically, residues 134–1527 are cytoplasmic; it reads RYRFLNMYSR…RTLAPRRASI (1394 aa). Disordered regions lie at residues 240-259, 299-387, 576-596, and 750-785; these read ADHE…GQNV, LSSS…HPDI, EKEQ…PFHR, and AHGE…RRQS. Residues 355-373 show a composition bias toward basic and acidic residues; that stretch reads HLEESRGTPDHDHQPESRT. Residues 685-804 and 846-966 contribute to the a nucleoside 3',5'-cyclic phosphate site; these read GGTS…VGSV and RLTS…IAQR. A compositionally biased stretch (low complexity) spans 761 to 771; the sequence is RTTTASSRTSS. In terms of domain architecture, PNPLA spans 1224–1388; that stretch reads LVLGGGGARG…IDNLTVPHMK (165 aa). The short motif at 1228–1233 is the GXGXXG element; the sequence is GGGARG. The short motif at 1255 to 1259 is the GXSXG element; it reads GTSIG. Ser-1257 acts as the Nucleophile in catalysis. Asp-1375 acts as the Proton acceptor in catalysis. Positions 1375–1377 match the DGA/G motif; the sequence is DGG.

The protein belongs to the NTE family.

Its subcellular location is the endoplasmic reticulum membrane. It catalyses the reaction a 1-acyl-sn-glycero-3-phosphocholine + H2O = sn-glycerol 3-phosphocholine + a fatty acid + H(+). With respect to regulation, inhibited by organophosphorus esters. In terms of biological role, intracellular phospholipase B that catalyzes the double deacylation of phosphatidylcholine (PC) to glycerophosphocholine (GroPCho). Plays an important role in membrane lipid homeostasis. Responsible for the rapid PC turnover in response to inositol, elevated temperatures, or when choline is present in the growth medium. This Aspergillus terreus (strain NIH 2624 / FGSC A1156) protein is Lysophospholipase nte1 (nte1).